A 66-amino-acid chain; its full sequence is Large ribosomal subunit protein bL33c (66 aa).

The protein belongs to the bacterial ribosomal protein bL33 family.

Its subcellular location is the plastid. The protein resides in the chloroplast. The polypeptide is Large ribosomal subunit protein bL33c (Eucalyptus globulus subsp. globulus (Tasmanian blue gum)).